The following is a 198-amino-acid chain: MSNQVNDISYVSLIQVNIVLNKNIILWLGSATPRALRDIDLAQDSVVKIFSFSREPNVVQPWQTTEKEYSSSGFAISGRRILTNAHVVGDHSYLQVRKHGSPTKYKAEVKAFGIFGARRYTFIGETIYALGYPRDGDIISVTKGIVTRVEPQKYAHSSIEILTIQTDACINGGKSGGPVVMGNKVAGVVFENDSPSDK.

Positions lysine 48–lysine 198 are serine protease. Residues histidine 86 and serine 175 each act as charge relay system in the active site.

This sequence belongs to the peptidase S1B family.

The chain is Putative Do-like 15 protein (DEGP15) from Arabidopsis thaliana (Mouse-ear cress).